Here is a 418-residue protein sequence, read N- to C-terminus: Putative competence-damage inducible protein (418 aa).

It belongs to the CinA family.

In Streptococcus pneumoniae (strain JJA), this protein is Putative competence-damage inducible protein.